The following is a 476-amino-acid chain: Vitamin D-binding protein (476 aa).

The signal sequence occupies residues 1–16; the sequence is MKRVLVLLLALAFGHA. 3 consecutive Albumin domains span residues 17–208, 209–394, and 395–476; these read LERG…QMKH, LSLL…LLKR, and QLTS…TLQS. Intrachain disulfides connect cysteine 29–cysteine 75, cysteine 74–cysteine 83, cysteine 96–cysteine 112, cysteine 111–cysteine 122, cysteine 145–cysteine 190, cysteine 189–cysteine 198, cysteine 220–cysteine 266, cysteine 265–cysteine 273, cysteine 286–cysteine 300, cysteine 299–cysteine 311, cysteine 335–cysteine 376, cysteine 375–cysteine 384, cysteine 407–cysteine 453, and cysteine 452–cysteine 462. Asparagine 288 carries N-linked (GlcNAc...) asparagine glycosylation. Serine 434 bears the Phosphoserine mark.

Belongs to the ALB/AFP/VDB family. As to quaternary structure, associates with membrane-bound immunoglobulin on the surface of B-lymphocytes and with IgG Fc receptor on the membranes of T-lymphocytes. Interacts with LRP2; the interaction is required for renal uptake of GC in complex with 25-hydroxyvitamin D3.

The protein localises to the secreted. Functionally, involved in vitamin D transport and storage, scavenging of extracellular G-actin, enhancement of the chemotactic activity of C5 alpha for neutrophils in inflammation and macrophage activation. This chain is Vitamin D-binding protein (Gc), found in Mus musculus (Mouse).